Here is a 201-residue protein sequence, read N- to C-terminus: Small ribosomal subunit protein uS4c (201 aa).

The segment at leucine 15–tyrosine 44 is disordered. Residues methionine 89–asparagine 150 form the S4 RNA-binding domain.

The protein belongs to the universal ribosomal protein uS4 family. Part of the 30S ribosomal subunit. Contacts protein S5. The interaction surface between S4 and S5 is involved in control of translational fidelity.

The protein resides in the plastid. It is found in the chloroplast. One of the primary rRNA binding proteins, it binds directly to 16S rRNA where it nucleates assembly of the body of the 30S subunit. Its function is as follows. With S5 and S12 plays an important role in translational accuracy. The chain is Small ribosomal subunit protein uS4c (rps4) from Calycanthus floridus var. glaucus (Eastern sweetshrub).